The chain runs to 205 residues: Large ribosomal subunit protein uL4 (205 aa).

The tract at residues 56–76 is disordered; sequence VSGTTAKPYRQKHTGRARQGS.

The protein belongs to the universal ribosomal protein uL4 family. As to quaternary structure, part of the 50S ribosomal subunit.

Its function is as follows. One of the primary rRNA binding proteins, this protein initially binds near the 5'-end of the 23S rRNA. It is important during the early stages of 50S assembly. It makes multiple contacts with different domains of the 23S rRNA in the assembled 50S subunit and ribosome. Forms part of the polypeptide exit tunnel. The chain is Large ribosomal subunit protein uL4 from Ehrlichia ruminantium (strain Welgevonden).